The primary structure comprises 676 residues: Probable LRR receptor-like serine/threonine-protein kinase At4g31250 (676 aa).

The first 26 residues, 1-26 (MTRDDKFPIVYSLLLIVLLFVSPIYG), serve as a signal peptide directing secretion. Topologically, residues 27 to 242 (DGDADALLKF…LLPCRYTRPP (216 aa)) are extracellular. Residues N42, N73, and N83 are each glycosylated (N-linked (GlcNAc...) asparagine). LRR repeat units lie at residues 98 to 122 (IRGL…IDGL), 123 to 146 (VSLA…LFSG), 148 to 171 (KALL…LGKL), 172 to 195 (PKLT…KQKN), and 197 to 218 (VTVN…GLMN). N218 carries an N-linked (GlcNAc...) asparagine glycan. Residues 243 to 263 (FFTVFLLALTILAVVVLITVF) traverse the membrane as a helical segment. The Cytoplasmic portion of the chain corresponds to 264 to 676 (LSVCILSRRQ…RAMTEEFSLM (413 aa)). Residues 319–330 (TVQRDSTATSGA) are compositionally biased toward polar residues. A disordered region spans residues 319-347 (TVQRDSTATSGAISVGGLSPDEDKRGDQR). One can recognise a Protein kinase domain in the interval 366–640 (RASAEVLGSG…HEAVDRIEEV (275 aa)). S368 bears the Phosphoserine mark. Residues 372–380 (LGSGGFGSS) and K394 contribute to the ATP site. Phosphoserine is present on residues S446 and S543. The tract at residues 641–676 (DRDAGGGQESVRSSYVTASDGDHRSSRAMTEEFSLM) is disordered.

The protein belongs to the protein kinase superfamily. Ser/Thr protein kinase family.

The protein resides in the membrane. It carries out the reaction L-seryl-[protein] + ATP = O-phospho-L-seryl-[protein] + ADP + H(+). The enzyme catalyses L-threonyl-[protein] + ATP = O-phospho-L-threonyl-[protein] + ADP + H(+). The polypeptide is Probable LRR receptor-like serine/threonine-protein kinase At4g31250 (Arabidopsis thaliana (Mouse-ear cress)).